A 607-amino-acid chain; its full sequence is Arginine--tRNA ligase (607 aa).

Positions 147-157 (PNIAKEMHVGH) match the 'HIGH' region motif.

This sequence belongs to the class-I aminoacyl-tRNA synthetase family. As to quaternary structure, monomer.

It is found in the cytoplasm. It carries out the reaction tRNA(Arg) + L-arginine + ATP = L-arginyl-tRNA(Arg) + AMP + diphosphate. The protein is Arginine--tRNA ligase of Prochlorococcus marinus (strain NATL2A).